Here is a 405-residue protein sequence, read N- to C-terminus: Potassium channel subfamily K member 13 (405 aa).

The Cytoplasmic portion of the chain corresponds to 1–19 (MAGRGCGCSPGHLNEDNAR). The helical transmembrane segment at 20 to 40 (FLLLAGLILLYLLGGAAVFSA) threads the bilayer. N59 and N65 each carry an N-linked (GlcNAc...) asparagine glycan. Positions 95 to 115 (WDFTGAFYFVGTVVSTIGFGM) form an intramembrane region, pore-forming. K(+)-binding residues include T110, I111, and G112. Residues 110-115 (TIGFGM) form a selectivity filter 1 region. Residues 125 to 145 (IFLIFYGLIGCASTILFFNLF) traverse the membrane as a helical segment. The Cytoplasmic portion of the chain corresponds to 146 to 193 (LERLITVIACVMRSCHQQQLRRRGAVTQDNMKAPEKGEADSLTGWKPS). A helical transmembrane segment spans residues 194–214 (VYYVMLILCLASVAISCGASA). The segment at residues 224 to 244 (YFDSVYFCFVAFSTIGFGDLV) is an intramembrane region (pore-forming). 4 residues coordinate K(+): T237, I238, G239, and F240. The interval 237-242 (TIGFGD) is selectivity filter 2. The chain crosses the membrane as a helical span at residues 263 to 283 (FLILMGVCCIYSLFNVISILI). Residues 284-405 (KQTVNWILRK…NRLAETSGDR (122 aa)) are Cytoplasmic-facing.

The protein belongs to the two pore domain potassium channel (TC 1.A.1.8) family. Homodimer. Heterodimer with KCNK12.

It localises to the cell membrane. It catalyses the reaction K(+)(in) = K(+)(out). In terms of biological role, k(+) channel that conducts outward rectifying tonic currents potentiated by purinergic signals. Homo- and heterodimerizes to form functional channels with distinct regulatory and gating properties. Contributes most of K(+) currents at the plasma membrane of resting microglia. Maintains a depolarized membrane potential required for proper ramified microglia morphology and phagocytosis, selectively mediating microglial pruning of presynaptic compartments at hippocampal excitatory synapses. Upon local release of ATP caused by neuronal injury or infection, it is potentiated by P2RY12 and P2RX7 receptor signaling and contributes to ATP-triggered K(+) efflux underlying microglial NLRP3 inflammasome assembly and IL1B release. The sequence is that of Potassium channel subfamily K member 13 from Mus musculus (Mouse).